We begin with the raw amino-acid sequence, 637 residues long: Nuclear receptor subfamily 2 group C member 1-B (637 aa).

Residues 149–224 (VELCVVCGDK…LGMKQDSVQC (76 aa)) constitute a DNA-binding region (nuclear receptor). 2 consecutive NR C4-type zinc fingers follow at residues 152-172 (CVVC…CEGC) and 188-207 (CRGS…CQYC). Residues 383-624 (CVGSGSNLLP…SIIPYILRME (242 aa)) enclose the NR LBD domain.

It belongs to the nuclear hormone receptor family. NR2 subfamily.

The protein resides in the nucleus. Functionally, orphan nuclear receptor. Binds the IR7 element in the promoter of its own gene in an autoregulatory negative feedback mechanism. Primarily repressor of a broad range of genes. Binds to hormone response elements (HREs) consisting of two 5'-AGGTCA-3' half site direct repeat consensus sequences. The polypeptide is Nuclear receptor subfamily 2 group C member 1-B (nr2c1-b) (Xenopus laevis (African clawed frog)).